We begin with the raw amino-acid sequence, 68 residues long: Large ribosomal subunit protein uL29 (68 aa).

This sequence belongs to the universal ribosomal protein uL29 family.

This Finegoldia magna (strain ATCC 29328 / DSM 20472 / WAL 2508) (Peptostreptococcus magnus) protein is Large ribosomal subunit protein uL29.